The chain runs to 415 residues: Gamma-glutamyl phosphate reductase (415 aa).

It belongs to the gamma-glutamyl phosphate reductase family.

The protein resides in the cytoplasm. The enzyme catalyses L-glutamate 5-semialdehyde + phosphate + NADP(+) = L-glutamyl 5-phosphate + NADPH + H(+). Its pathway is amino-acid biosynthesis; L-proline biosynthesis; L-glutamate 5-semialdehyde from L-glutamate: step 2/2. Functionally, catalyzes the NADPH-dependent reduction of L-glutamate 5-phosphate into L-glutamate 5-semialdehyde and phosphate. The product spontaneously undergoes cyclization to form 1-pyrroline-5-carboxylate. This is Gamma-glutamyl phosphate reductase from Bacillus cereus (strain 03BB102).